The primary structure comprises 562 residues: Potassium-transporting ATPase potassium-binding subunit (562 aa).

Helical transmembrane passes span 5–25 (GILA…PLGG), 65–85 (AYLR…YAVF), 135–155 (IGIT…AMAF), 181–201 (LLLP…VPET), 257–277 (ILEI…AGHF), 283–303 (LAIV…YIVY), 331–351 (FGLP…TGAV), 358–378 (LMPL…IFGG), 381–401 (VGLL…GLMV), 422–442 (AAML…MALP), 486–506 (ISIG…MLAI), and 528–548 (FAFG…TFFP).

This sequence belongs to the KdpA family. In terms of assembly, the system is composed of three essential subunits: KdpA, KdpB and KdpC.

The protein localises to the cell membrane. Functionally, part of the high-affinity ATP-driven potassium transport (or Kdp) system, which catalyzes the hydrolysis of ATP coupled with the electrogenic transport of potassium into the cytoplasm. This subunit binds the extracellular potassium ions and delivers the ions to the membrane domain of KdpB through an intramembrane tunnel. The chain is Potassium-transporting ATPase potassium-binding subunit from Alicyclobacillus acidocaldarius subsp. acidocaldarius (strain ATCC 27009 / DSM 446 / BCRC 14685 / JCM 5260 / KCTC 1825 / NBRC 15652 / NCIMB 11725 / NRRL B-14509 / 104-IA) (Bacillus acidocaldarius).